The primary structure comprises 516 residues: Rho guanine nucleotide exchange factor 9 (516 aa).

One can recognise an SH3 domain in the interval 8–67; it reads DSIVSAEAVWDHVTMANRELAFKAGDVIKVLDASNKDWWWGQIDDEEGWFPASFVRLWVN. The segment at 100–110 is interaction with GPHN; it reads RDQMRANVINE. One can recognise a DH domain in the interval 103–287; it reads MRANVINEIM…RNVTQQINER (185 aa). Residues 318–425 form the PH domain; it reads ELIYTGEMAW…WLRAFREERK (108 aa). A disordered region spans residues 450–480; the sequence is RKASKQKGVNSARSVPPSYPPPQDPLNQGQY. At Ser502 the chain carries Phosphoserine.

As to quaternary structure, interacts with GPHN. In terms of tissue distribution, detected in embryonic and adult brain.

The protein localises to the cytoplasm. Its subcellular location is the postsynaptic density. Its function is as follows. Acts as a guanine nucleotide exchange factor (GEF) for CDC42. Promotes formation of GPHN clusters. This is Rho guanine nucleotide exchange factor 9 (Arhgef9) from Mus musculus (Mouse).